The chain runs to 336 residues: Ribosomal RNA large subunit methyltransferase F (336 aa).

The protein belongs to the methyltransferase superfamily. METTL16/RlmF family.

Its subcellular location is the cytoplasm. The catalysed reaction is adenosine(1618) in 23S rRNA + S-adenosyl-L-methionine = N(6)-methyladenosine(1618) in 23S rRNA + S-adenosyl-L-homocysteine + H(+). Specifically methylates the adenine in position 1618 of 23S rRNA. The polypeptide is Ribosomal RNA large subunit methyltransferase F (Yersinia pestis bv. Antiqua (strain Angola)).